Reading from the N-terminus, the 247-residue chain is Spermatogenesis-associated protein 46 (247 aa).

The interval 125-164 is disordered; the sequence is QRDSCLPEDTADSVCSSSPSPENTCPREATKKSRPGPDTT. A compositionally biased stretch (polar residues) spans 137-147; sequence SVCSSSPSPEN.

It localises to the nucleus membrane. Plays a role in spermiogenesis and fertilization. The sequence is that of Spermatogenesis-associated protein 46 (SPATA46) from Bos taurus (Bovine).